We begin with the raw amino-acid sequence, 206 residues long: Peptidyl-tRNA hydrolase (206 aa).

Tyr-14 is a tRNA binding site. The active-site Proton acceptor is His-19. Residues Phe-64 and Asn-66 each coordinate tRNA. The segment at 185–206 (VNGEAPKKSKDQAKEPANEQPR) is disordered. Basic and acidic residues predominate over residues 189–206 (APKKSKDQAKEPANEQPR).

This sequence belongs to the PTH family. In terms of assembly, monomer.

Its subcellular location is the cytoplasm. The catalysed reaction is an N-acyl-L-alpha-aminoacyl-tRNA + H2O = an N-acyl-L-amino acid + a tRNA + H(+). In terms of biological role, hydrolyzes ribosome-free peptidyl-tRNAs (with 1 or more amino acids incorporated), which drop off the ribosome during protein synthesis, or as a result of ribosome stalling. Functionally, catalyzes the release of premature peptidyl moieties from peptidyl-tRNA molecules trapped in stalled 50S ribosomal subunits, and thus maintains levels of free tRNAs and 50S ribosomes. This is Peptidyl-tRNA hydrolase from Herpetosiphon aurantiacus (strain ATCC 23779 / DSM 785 / 114-95).